A 144-amino-acid chain; its full sequence is Maximins 4/H3 type 1 (144 aa).

A signal peptide spans 1–18 (MNFKYIIAVSFFIASAYA). Positions 19–43 (RSEEKDVQSLSQRDVLEEESLREIR) are excised as a propeptide. Asparagine amide is present on asparagine 70. The propeptide occupies 74–123 (TAEDHEVMKRLEAVMRDLDSLDHPEEASERETRGFNQEEIANLFTKKEKR). Isoleucine amide is present on isoleucine 143.

The protein belongs to the bombinin family. As to expression, expressed by the skin glands.

The protein localises to the secreted. Maximin-4 shows antibacterial activity against both Gram-positive and Gram-negative bacteria. It also shows antimicrobial activity against the fungus C.albicans, but not against A.flavus nor P.uticale. It has little hemolytic activity. It does not possess a significant cytotoxicity against tumor cell lines. It does not possess a significant anti-HIV activity. In terms of biological role, maximin-H3 shows antibacterial activity against both Gram-positive and Gram-negative bacteria. It also shows antimicrobial activity against the fungus C.albicans. Shows strong hemolytic activity. The chain is Maximins 4/H3 type 1 from Bombina maxima (Giant fire-bellied toad).